A 94-amino-acid polypeptide reads, in one-letter code: Large ribosomal subunit protein eL31 (94 aa).

It belongs to the eukaryotic ribosomal protein eL31 family.

This Pyrococcus abyssi (strain GE5 / Orsay) protein is Large ribosomal subunit protein eL31 (rpl31e).